The chain runs to 1029 residues: Exportin-T (1029 aa).

It belongs to the exportin family.

Its subcellular location is the nucleus. It is found in the cytoplasm. In terms of biological role, tRNA nucleus export receptor which facilitates tRNA translocation across the nuclear pore complex. Involved in pre-tRNA splicing, probably by affecting the interaction of pre-tRNA with splicing endonuclease. This Aspergillus clavatus (strain ATCC 1007 / CBS 513.65 / DSM 816 / NCTC 3887 / NRRL 1 / QM 1276 / 107) protein is Exportin-T (los1).